We begin with the raw amino-acid sequence, 442 residues long: Probable carboxypeptidase PADG_04062 (442 aa).

The signal sequence occupies residues 1–20 (MKLQYLVALLSVQAVPPVTA). N-linked (GlcNAc...) asparagine glycosylation occurs at N102. Residue D160 participates in Zn(2+) binding. E192 (proton acceptor) is an active-site residue. E193 lines the Zn(2+) pocket. N343 is a glycosylation site (N-linked (GlcNAc...) asparagine).

It belongs to the peptidase M20A family. The cofactor is Zn(2+).

It is found in the secreted. This Paracoccidioides brasiliensis (strain Pb18) protein is Probable carboxypeptidase PADG_04062.